The chain runs to 160 residues: CXXC motif containing zinc binding protein (160 aa).

Residues cysteine 33, cysteine 36, cysteine 67, and cysteine 70 each coordinate Zn(2+). A Phosphoserine modification is found at serine 75.

It belongs to the UPF0587 family. Monomer.

This chain is CXXC motif containing zinc binding protein (CZIB), found in Bos taurus (Bovine).